The primary structure comprises 537 residues: Glucocorticoid-induced transcript 1 protein (537 aa).

2 disordered regions span residues 1-45 (MSTA…APAA) and 62-254 (LLRG…HGNH). Residues Ser-69, Ser-96, Ser-98, and Ser-99 each carry the phosphoserine modification. The segment covering 69–86 (SPTRPAAAATAAAALGSL) has biased composition (low complexity). Residues 97 to 106 (PSSPTPPPAA) are compositionally biased toward pro residues. Residue Thr-101 is modified to Phosphothreonine. Residues 121–136 (RSPESRRRSSSPERRS) are compositionally biased toward basic and acidic residues. Over residues 152 to 168 (IRTSSTIRRTSSLDTIT) the composition is skewed to low complexity. 2 positions are modified to phosphoserine: Ser-162 and Ser-163. Phosphothreonine occurs at positions 166 and 168. Positions 178–192 (RDPHVHYPSCMRDKA) are enriched in basic and acidic residues. Position 214 is a phosphoserine (Ser-214). Residues 217–244 (SADQLKEIAKLRQQLQRSKQSSRHSKEK) are a coiled coil. Position 248 is a phosphoserine (Ser-248). Thr-256 carries the phosphothreonine modification. Position 293 is a phosphoserine (Ser-293). A compositionally biased stretch (basic and acidic residues) spans 309–321 (EVSKPLDIPDGRR). The disordered stretch occupies residues 309–407 (EVSKPLDIPD…KPNNSYMFKR (99 aa)). A compositionally biased stretch (polar residues) spans 329 to 346 (RSSSTRSIDTQTPSVQER). Thr-333 bears the Phosphothreonine mark. At Ser-335 the chain carries Phosphoserine. Thr-340 is modified (phosphothreonine). The span at 347–359 (SSSCSSHSPCVSP) shows a compositional bias: low complexity. A phosphoserine mark is found at Ser-384, Ser-388, Ser-396, Ser-402, and Ser-470. The segment at 495-520 (SLSDDTSTADSLEPSAQQPSQQQQLL) is disordered.

In terms of tissue distribution, predominantly expressed in thymus and testis, especially in CD4+CD8+ cells and at specific stages of spermatogenesis.

The protein is Glucocorticoid-induced transcript 1 protein (Glcci1) of Mus musculus (Mouse).